Reading from the N-terminus, the 257-residue chain is ADP-dependent (S)-NAD(P)H-hydrate dehydratase (257 aa).

Residues 1-257 enclose the YjeF C-terminal domain; it reads MGRLQRTLSN…VIERIPDTIR (257 aa). Glycine 200 lines the AMP pocket. Aspartate 201 lines the (6S)-NADPHX pocket.

It belongs to the NnrD/CARKD family. Homotetramer. Mg(2+) is required as a cofactor.

The enzyme catalyses (6S)-NADHX + ADP = AMP + phosphate + NADH + H(+). It catalyses the reaction (6S)-NADPHX + ADP = AMP + phosphate + NADPH + H(+). In terms of biological role, catalyzes the dehydration of the S-form of NAD(P)HX at the expense of ADP, which is converted to AMP. Together with NAD(P)HX epimerase, which catalyzes the epimerization of the S- and R-forms, the enzyme allows the repair of both epimers of NAD(P)HX, a damaged form of NAD(P)H that is a result of enzymatic or heat-dependent hydration. This Haloterrigena turkmenica (strain ATCC 51198 / DSM 5511 / JCM 9101 / NCIMB 13204 / VKM B-1734 / 4k) (Halococcus turkmenicus) protein is ADP-dependent (S)-NAD(P)H-hydrate dehydratase.